A 652-amino-acid chain; its full sequence is Forkhead box protein O1-A (652 aa).

3 disordered regions span residues 1 to 57 (MADA…EPSS), 208 to 277 (SSWW…NSHS), and 359 to 406 (NLLS…QQTQ). The span at 41 to 57 (DSNTSSPAPSVKQEPSS) shows a compositional bias: polar residues. A DNA-binding region (fork-head) is located at residues 134 to 228 (WGNMSYADLI…KSGKSPRRRA (95 aa)). Over residues 238 to 249 (AKSRGRAAKKKL) the composition is skewed to basic residues. A compositionally biased stretch (low complexity) spans 362 to 397 (SPKNPSTGGPGSGSNQSSPSSLMQASPGYSPYSSPG).

It localises to the cytoplasm. Its subcellular location is the nucleus. Its function is as follows. Transcription factor that regulates metabolic homeostasis in response to oxidative stress. Binds to the consensus sequence 5'-TT[G/A]TTTTG-3' and the related Daf-16 family binding element (DBE) with consensus sequence 5'-TT[G/A]TTTAC-3'. Main regulator of redox balance and osteoblast numbers and controls bone mass. Orchestrates the endocrine function of the skeleton in regulating glucose metabolism. May be involved in regulating cellular homeostasis in the eye. May act as a positive regulator of apoptosis in cardiac smooth muscle cells as a result of its transcriptional activation of pro-apoptotic genes. This is Forkhead box protein O1-A (foxo1a) from Danio rerio (Zebrafish).